Consider the following 137-residue polypeptide: Nucleoside diphosphate kinase (137 aa).

Residues Lys9, Phe57, Arg85, Thr91, Arg102, and Asn112 each contribute to the ATP site. His115 serves as the catalytic Pros-phosphohistidine intermediate.

This sequence belongs to the NDK family. Homotetramer. The cofactor is Mg(2+).

The protein resides in the cytoplasm. The catalysed reaction is a 2'-deoxyribonucleoside 5'-diphosphate + ATP = a 2'-deoxyribonucleoside 5'-triphosphate + ADP. It catalyses the reaction a ribonucleoside 5'-diphosphate + ATP = a ribonucleoside 5'-triphosphate + ADP. Its function is as follows. Major role in the synthesis of nucleoside triphosphates other than ATP. The ATP gamma phosphate is transferred to the NDP beta phosphate via a ping-pong mechanism, using a phosphorylated active-site intermediate. The sequence is that of Nucleoside diphosphate kinase from Campylobacter concisus (strain 13826).